The sequence spans 306 residues: Polyphosphate kinase PPK2B (306 aa).

Belongs to the polyphosphate kinase 2 (PPK2) family. Class I subfamily. In terms of assembly, homotetramer. The cofactor is Mn(2+).

It carries out the reaction [phosphate](n) + ATP = [phosphate](n+1) + ADP. The enzyme catalyses [phosphate](n) + GTP = [phosphate](n+1) + GDP. Functionally, catalyzes the synthesis of polyP from ATP or GTP. Can also use inorganic polyphosphate (polyP) as a donor to convert ADP to ATP, but the activity is 10-fold higher in vitro for polyP synthesis than for ATP formation. The protein is Polyphosphate kinase PPK2B of Corynebacterium glutamicum (strain ATCC 13032 / DSM 20300 / JCM 1318 / BCRC 11384 / CCUG 27702 / LMG 3730 / NBRC 12168 / NCIMB 10025 / NRRL B-2784 / 534).